A 505-amino-acid chain; its full sequence is MAVVASAPGKVLMTGGYLVLEKPNAGLVLSTNARFYAIVKPINEEVKPESWAWKWTDVKLTSPQLSRESMYKLSLNHLTLQSVSASDSRNPFVEHAIQYAIAAAHLATEKDKESLHKLLLQGLDITILGSNDFYSYRNQIESAGLPLTPESLGTLAPFASITFNAAESNGANSKPEVAKTGLGSSAAMTTAVVAALLHYLGVVDLSDPCKEGKFGCSDLDVIHMIAQTSHCLAQGKVGSGFDVSCAVYGSQRYVRFSPEVLSFAQVAVTGLPLNEVIGTILKGKWDNKRTEFSLPPLMNLFLGEPGSGGSSTPSMVGAVKKWQMSDPEKARENWQNLSDANLELETKLNDLSKLAKDHWDVYLRVIKSCSVLTSEKWVLHATEPINEAIIKELLEAREAMLRIRILMRQMGEAASVPIEPESQTQLLDSTMSAEGVLLAGVPGAGGFDAIFAITLGDSGTKLTQAWSSHNVLALLVREDPHGVCLESGDPRTTCITSGVSSIHLE.

Ala2 carries the N-acetylalanine modification. A Peroxisomal targeting signal PTS2 motif is present at residues 57 to 65; the sequence is DVKLTSPQL. 177–187 lines the ATP pocket; it reads VAKTGLGSSAA.

The protein belongs to the GHMP kinase family. Mevalonate kinase subfamily.

Its subcellular location is the peroxisome. It carries out the reaction (R)-5-phosphomevalonate + ATP = (R)-5-diphosphomevalonate + ADP. It functions in the pathway isoprenoid biosynthesis; isopentenyl diphosphate biosynthesis via mevalonate pathway; isopentenyl diphosphate from (R)-mevalonate: step 2/3. This chain is Phosphomevalonate kinase, peroxisomal, found in Arabidopsis thaliana (Mouse-ear cress).